The chain runs to 382 residues: Processive diacylglycerol beta-glucosyltransferase (382 aa).

This sequence belongs to the glycosyltransferase 28 family. UgtP subfamily.

The protein localises to the cell membrane. It catalyses the reaction a 1,2-diacyl-3-O-(beta-D-glucopyranosyl)-sn-glycerol + UDP-alpha-D-glucose = a 1,2-diacyl-3-O-(beta-D-Glc-(1-&gt;6)-beta-D-Glc)-sn-glycerol + UDP + H(+). It carries out the reaction a 1,2-diacyl-3-O-(beta-D-Glc-(1-&gt;6)-beta-D-Glc)-sn-glycerol + UDP-alpha-D-glucose = a 1,2-diacyl-3-O-(beta-D-Glc-(1-&gt;6)-beta-D-Glc-(1-&gt;6)-beta-D-Glc)-sn-glycerol + UDP + H(+). The enzyme catalyses a 1,2-diacyl-sn-glycerol + UDP-alpha-D-glucose = a 1,2-diacyl-3-O-(beta-D-glucopyranosyl)-sn-glycerol + UDP + H(+). It participates in glycolipid metabolism; diglucosyl-diacylglycerol biosynthesis. In terms of biological role, processive glucosyltransferase involved in the biosynthesis of both the bilayer- and non-bilayer-forming membrane glucolipids. Is able to successively transfer up to three glucosyl residues to diacylglycerol (DAG), thereby catalyzing the formation of beta-monoglucosyl-DAG (3-O-(beta-D-glucopyranosyl)-1,2-diacyl-sn-glycerol), beta-diglucosyl-DAG (3-O-(beta-D-glucopyranosyl-beta-(1-&gt;6)-D-glucopyranosyl)-1,2-diacyl-sn-glycerol) and beta-triglucosyl-DAG (3-O-(beta-D-glucopyranosyl-beta-(1-&gt;6)-D-glucopyranosyl-beta-(1-&gt;6)-D-glucopyranosyl)-1,2-diacyl-sn-glycerol). Beta-diglucosyl-DAG is the predominant glycolipid found in Bacillales and is also used as a membrane anchor for lipoteichoic acid (LTA). Also seems to be able to form beta-tetraglucosyl-DAG, although this glycolipid has not been found in B.subtilis membrane. UgtP can only use UDP-glucose as sugar donor. This chain is Processive diacylglycerol beta-glucosyltransferase, found in Bacillus subtilis (strain 168).